Reading from the N-terminus, the 218-residue chain is Probable GTP-binding protein EngB (218 aa).

Residues 23-200 enclose the EngB-type G domain; that stretch reads EVPEIAFVGR…AQLLWQWAHP (178 aa). Residues 31 to 38, 58 to 62, 80 to 83, 150 to 153, and 179 to 181 each bind GTP; these read GRSNAGKS, GRTQH, DLPG, TKAD, and FSA. Residues S38 and T60 each contribute to the Mg(2+) site.

It belongs to the TRAFAC class TrmE-Era-EngA-EngB-Septin-like GTPase superfamily. EngB GTPase family. Mg(2+) is required as a cofactor.

In terms of biological role, necessary for normal cell division and for the maintenance of normal septation. The protein is Probable GTP-binding protein EngB of Acidovorax ebreus (strain TPSY) (Diaphorobacter sp. (strain TPSY)).